A 370-amino-acid polypeptide reads, in one-letter code: Transcription factor E2F2 (370 aa).

Residues 1–73 (MYKRKTASIV…QSQSQPGQQR (73 aa)) are disordered. Residues 15 to 26 (SAAGTTSSAMMM) show a composition bias toward low complexity. Residues 31 to 49 (AETSVRSQSYESTPVSMDT) show a composition bias toward polar residues. Over residues 59-73 (SPSNSQSQSQPGQQR) the composition is skewed to low complexity. Residues 72–137 (QRSVGSLVLL…GRHCSLVRWR (66 aa)) mediate DNA binding. The interval 137 to 226 (RGGGFNNAKD…VDIKRNHYEL (90 aa)) is dimerization.

The protein belongs to the E2F/DP family. As to quaternary structure, forms a heterodimer with Dp. Interacts with Rbf/Rbf1 and Rbf2. Component of the DREAM complex, which is at least composed of Myb, Caf1-55, mip40, mip120, mip130, E2f2, Dp, Rbf, Rbf2, lin-52, HDAC1/Rpd3 and l(3)mbt. As to expression, ubiquitously expressed in eye disk.

Its subcellular location is the nucleus. Transcriptional repressor that binds to E2f sites and represses E2f-regulated target genes. Binding to E2f sites requires transcription factor Dp. Acts synergistically with Rbf2 to antagonize E2f1-mediated transcriptional activation. Component of the DREAM complex, a multiprotein complex that can both act as a transcription activator or repressor depending on the context. The DREAM complex is required for recruiting E2f2 at differentiation-specific promoters and for stabilizing E2f2-Rbf complexes during S phase. During development, the complex represses transcription of developmentally controlled E2f target genes. During oogenesis, plays a role in restricting DNA synthesis to sites of chorion gene amplification in late stage ovarian follicle cells. Plays an inhibitory role in ionizing radiation (IR)-induced p53-independent apoptosis. May be involved in cell cycle exit by temporarily limiting CycE-dependent activation of E2f-regulated transcription. The polypeptide is Transcription factor E2F2 (E2f2) (Drosophila melanogaster (Fruit fly)).